The following is a 232-amino-acid chain: Sugar fermentation stimulation protein homolog (232 aa).

It belongs to the SfsA family.

In Brucella anthropi (strain ATCC 49188 / DSM 6882 / CCUG 24695 / JCM 21032 / LMG 3331 / NBRC 15819 / NCTC 12168 / Alc 37) (Ochrobactrum anthropi), this protein is Sugar fermentation stimulation protein homolog.